Here is a 1939-residue protein sequence, read N- to C-terminus: Myosin-2 (1939 aa).

The 50-residue stretch at 33 to 82 folds into the Myosin N-terminal SH3-like domain; the sequence is DAKTSVFVAEPKESFVKGTIQSREGGKVTVKTEAGATLTVKEDQVFPMNP. A phosphothreonine mark is found at Thr-64 and Thr-69. The 697-residue stretch at 86-782 folds into the Myosin motor domain; sequence DKIEDMAMMT…LLGLLEEMRD (697 aa). Lys-130 is subject to N6,N6,N6-trimethyllysine. 179 to 186 contacts ATP; sequence GESGAGKT. Position 389 is a phosphotyrosine (Tyr-389). At Ser-392 the chain carries Phosphoserine. Residue Thr-419 is modified to Phosphothreonine. At Ser-625 the chain carries Phosphoserine. The actin-binding stretch occupies residues 659 to 681; sequence LNKLMTNLRSTHPHFVRCIIPNE. His-757 carries the pros-methylhistidine modification. The segment at 761 to 775 is actin-binding; it reads KFGHTKVFFKAGLLG. Positions 785-814 constitute an IQ domain; sequence LAQLITRTQARCRGFLARVEYQKMVERRES. The stretch at 843–1939 forms a coiled coil; that stretch reads LLKSAESEKE…EVHTKVISEE (1097 aa). Ser-1092 and Ser-1096 each carry phosphoserine. 2 disordered regions span residues 1126-1147 and 1153-1172; these read IEAE…SREL and RLEE…KKRE. Residues 1128-1147 show a composition bias toward basic and acidic residues; sequence AERASRAKAEKQRSDLSREL. A phosphoserine mark is found at Ser-1162 and Ser-1237. Thr-1241 bears the Phosphothreonine mark. Residue Ser-1243 is modified to Phosphoserine. At Thr-1255 the chain carries Phosphothreonine. Ser-1261 bears the Phosphoserine mark. Thr-1286 bears the Phosphothreonine mark. Phosphoserine occurs at positions 1288, 1292, 1303, and 1306. Tyr-1464 is modified (phosphotyrosine). Thr-1467 carries the post-translational modification Phosphothreonine. The residue at position 1474 (Ser-1474) is a Phosphoserine. Residue Tyr-1492 is modified to Phosphotyrosine. Phosphoserine is present on Ser-1495. Phosphothreonine is present on Thr-1501. Ser-1514 is modified (phosphoserine). Thr-1517 is subject to Phosphothreonine. A phosphoserine mark is found at Ser-1542, Ser-1554, Ser-1574, Ser-1600, Ser-1603, Ser-1714, and Ser-1726. 2 positions are modified to phosphothreonine: Thr-1730 and Thr-1736. At Ser-1739 the chain carries Phosphoserine. The tract at residues 1885 to 1915 is disordered; it reads QAEEAEEQSNTNLSKFRKLQHELEEAEERAD.

Belongs to the TRAFAC class myosin-kinesin ATPase superfamily. Myosin family. As to quaternary structure, muscle myosin is a hexameric protein that consists of 2 heavy chain subunits (MHC), 2 alkali light chain subunits (MLC) and 2 regulatory light chain subunits (MLC-2). Interacts with GCSAM.

The protein resides in the cytoplasm. Its subcellular location is the myofibril. Myosins are actin-based motor molecules with ATPase activity essential for muscle contraction. The polypeptide is Myosin-2 (MYH2) (Sus scrofa (Pig)).